A 41-amino-acid chain; its full sequence is U-megalopygitoxin(4)-Mo5 (41 aa).

Residues 1-23 (MKCSLLLVVFAAMVALFAAGTNA) form the signal peptide.

It belongs to the caterpillar 4 family. In terms of tissue distribution, expressed by the venom apparatus.

It localises to the secreted. In terms of biological role, probable toxin. This is U-megalopygitoxin(4)-Mo5 from Megalopyge opercularis (Southern flannel moth).